The sequence spans 349 residues: Terpene synthase 2 (349 aa).

A DDxx(x)D/E motif motif is present at residues 84–89; the sequence is DDLFDG. Residues 229-237 carry the NDxxSxxxD/E motif motif; it reads NDCVSYEKE.

The protein belongs to the terpene synthase family.

It catalyses the reaction (2E,6E)-farnesyl diphosphate = (3S)-(+)-asterisca-2(9),6-diene + diphosphate. It carries out the reaction (2E)-geranyl diphosphate = (Z)-beta-ocimene + diphosphate. The enzyme catalyses (2E)-geranyl diphosphate + H2O = linalool + diphosphate. Terpene synthase that converts its substrate farnesyl diphosphate (FPP) into the sesquiterpene (3S)-(+)-asterisca-2(9),6-diene. Is also able to convert geranyl diphosphate (GPP) into a mixture of monoterpenes including (Z)-beta-ocimene, allo-ocimene and linalool. This chain is Terpene synthase 2, found in Dictyostelium discoideum (Social amoeba).